Here is a 2667-residue protein sequence, read N- to C-terminus: eIF-2-alpha kinase activator GCN1 (2667 aa).

HEAT repeat units follow at residues 19-56 (DSFYSEIKELEKSIQSNKLSERKNTLTRINSIGKHELS), 95-132 (QWIFSLVQSLKQLFKDISSATNTSLVTDELKINIVKFT), 159-198 (SFSLVLLNYFIDQIQSNSDLTTLLFAAQELLYRELTLQHM), 293-330 (DLQSIILPPLSRHIKRDQDQVFKILIFILENLSSDFNV), 336-375 (LLKSMLLPMLLPVIQSTISIEENRKLLKKTFTLIIERSKD), 398-439 (SQKL…SISI), 466-503 (ELPEQTIKIITNSLKNDDDIIKGQVILSLSKSLGPEAN), and 794-832 (LLNEELVKLMVKALSYEPVLAITQQQWSIYHTLPTELFV). Residues 842 to 879 (RNDRKVKPKTAEEQRDEESRKRIEEKKKIQSGELEKQE) are disordered. 18 HEAT repeats span residues 929-967 (PIIVALLQLMKHEITNHQFTQVFEKLICCVPSRFKLDRS), 985-1024 (LSEIQILGFIQKILTHIRESIAKEALSGFAFNYFWPIIKN), 1085-1122 (GVETSDIGELMEGIISKHVQVRSICLQAIEKIPSIYSP), 1199-1237 (HMIPEIVDNLFEIYEQNYPDEIRETPITSKFRISVATAL), 1290-1330 (GELL…HMDA), 1333-1370 (PKVSIVIDKLVDALSIPSESVQVGISKCIAQLIPSFKK), 1371-1407 (QGDRLIPMLLEKLKNSSGNYADRRGAAFGLAGSVKGL), 1412-1450 (LKNYSILDTLQSYIEDKKHPTSRQGALFAFECLCNTIGR), 1454-1491 (PYIIHILPKLLVCFGDNVSEVRDATADTAKAIMSQLSG), 1492-1529 (HGVKIVLPALLKALDDRSWRTKEGSIELLGAMAFCAPK), 1533-1570 (SCLPTIVPKLTYVLNDTHTKVQEAAKEALSHIGSVIRN), 1572-1608 (EIQIHVPLLLQTYDDPEIHSKELLENLLSTNYVHTID), 1610-1647 (ASLSLLLPILERTLKERSSELKKMSCQIVGNLCSLTEP), 1652-1689 (PYLNILMPVMKTVLLDPIPEVRAICARALGLLVRGMGE), 1691-1728 (NFSTLIPWLLETVKSDQGAVERSGAAQGLSEVLASLDI), 1729-1766 (SRFNSLINELLAMTNSPRPHVREGILSIFIFTPISLGD), 1770-1807 (PYLPKVLPQVLKGLADDSDPVREVCMRCGQSIVLQFAV), and 1809-1845 (GIEVIVPALEKVLFHENWRIRLSCVQLFGDLLFKLAG). The tract at residues 1853 to 1875 (SNNSSYNAKDDDDDEPGSSGNDI) is disordered. 10 HEAT repeats span residues 1882–1919 (ERLGRILSSLYMMRFDNNSSVRQKVLLIWKYIVSNTPK), 1923–1960 (EILPTLIEMIISSIGSNNVEKRQISAKTLGDIVSKLSD), 1962–1998 (ILPEILPILERGLRSELEETRQGVCIGLSEVISSAKT), 2002–2039 (PYLSSVVTCITKALCDPLIDVREAAAKAFDHLYHTFGS), 2040–2078 (KASNEILPQLIQLLDNSNNKDLAGYALDGLRQVILVRSS), 2080–2110 (VLPVLIPKLLSRPISTSNVTALSSLAADAGE), 2114–2152 (VHLSTIIPSLIESFTNPNTISNAKEIKEAAVSICKSIDE), 2154–2190 (GWDTLIGLLIEQTEIRLPNIRLGACELIGEFYNGNTM), 2193–2230 (EYPEELLLSLLSLFNDPDALVQQAANNALGFITKSLKK), and 2264–2301 (KGLASVLPVLISGLMYGTSDQREQATNTLRTVINHTSA). An RWDBD region region spans residues 2265–2412 (GLASVLPVLI…ISQESKLRAL (148 aa)). Residues 2326–2348 (QVKSAILQTLSLLISKSPASMKI) form an HEAT 37; degenerate repeat. The HEAT 38; degenerate repeat unit spans residues 2349–2385 (FLHQLQPTFIKCLSDSHKNVRTNAASALGLLMTLSSS). 4 HEAT repeats span residues 2387-2421 (DQLVNSLITGISTADSISQESKLRALQSIFEKKPK), 2425-2462 (ATLDKAIATIVDFLYQPSDDLRSMVAQTIGASSKCFTS), 2508-2545 (PNMPTIIKIIQTDCRDEKGPIRESSAYLAEAILVASPL), and 2546-2583 (TYAKDLVPSICHLIGDQSSSVSISALNVIKRFCKSNQQ).

It belongs to the GCN1 family. In terms of assembly, interacts with eif2ak4/gcn2; this interaction stimulates the eif2ak4/gcn2 kinase activity and is impaired by impact upon a variety of stress conditions, such as amino acid depletion, UV-C irradiation, proteasome inhibitor treatment and glucose deprivation. Interacts with impact; this prevents the interaction of gcn1 with eif2ak4/gcn2 and inhibits eif2ak4/gcn2 kinase activity.

The protein localises to the cytoplasm. Ribosome collision sensor that activates a translation quality control pathway when a ribosome has stalled during translation. Directly binds to the ribosome and acts as a sentinel for colliding ribosomes. Gcn1 also acts as a positive activator of the integrated stress response (ISR) by mediating activation of eif2ak4/gcn2 in response to amino acid starvation. Interaction with eif2ak4/gcn2 on translating ribosomes stimulates eif2ak4/gcn2 kinase activity, leading to phosphorylation of eukaryotic translation initiation factor 2 (eIF-2-alpha/eif2s1). EIF2S1/eIF-2-alpha phosphorylation converts EIF2S1/eIF-2-alpha into a global protein synthesis inhibitor, leading to a global attenuation of cap-dependent translation, and thus to a reduced overall utilization of amino acids, while concomitantly initiating the preferential translation of ISR-specific mRNAs, such as the transcriptional activator atf4, and hence allowing atf4-mediated reprogramming of amino acid biosynthetic gene expression to alleviate nutrient depletion. In Dictyostelium discoideum (Social amoeba), this protein is eIF-2-alpha kinase activator GCN1.